Consider the following 164-residue polypeptide: V-type proton ATPase 16 kDa proteolipid subunit (164 aa).

The Lumenal portion of the chain corresponds to 1–10 (MSDLCPPTAP). Residues 11–31 (FFGFMGAAVALIFANLGAAYG) traverse the membrane as a helical segment. Over 32-53 (TAKSGVGVSSMGVMKPDLVMKS) the chain is Cytoplasmic. The chain crosses the membrane as a helical span at residues 54–74 (IIPVVMAGVLGIYGLIIAVII). Over 75-96 (GNGVKGPEGGKPQYSSFTGFAH) the chain is Lumenal. Residues 97-118 (LAAGLACGLSGMAAGIAIGIVG) form a helical membrane-spanning segment. Over 119–130 (DAGVRASAQQAK) the chain is Cytoplasmic. A helical transmembrane segment spans residues 131-155 (LYVGMVLILIFAEALGLYGLIVGLI). The Lumenal segment spans residues 156–164 (LTSKEAPCS).

This sequence belongs to the V-ATPase proteolipid subunit family. V-ATPase is a heteromultimeric enzyme composed of a peripheral catalytic V1 complex (main components: subunits A, B, C, D, E, and F) attached to an integral membrane V0 proton pore complex (main component: the proteolipid protein; which is present as a hexamer that forms the proton-conducting pore).

The protein resides in the vacuole membrane. Functionally, proton-conducting pore forming subunit of the membrane integral V0 complex of vacuolar ATPase. V-ATPase is responsible for acidifying a variety of intracellular compartments in eukaryotic cells. In Chrysotila carterae (Marine alga), this protein is V-type proton ATPase 16 kDa proteolipid subunit (VAP).